Consider the following 448-residue polypeptide: Tubulin beta chain (448 aa).

Positions 11, 69, 138, 142, 143, 144, 204, and 226 each coordinate GTP. A Mg(2+)-binding site is contributed by Glu-69.

It belongs to the tubulin family. Dimer of alpha and beta chains. A typical microtubule is a hollow water-filled tube with an outer diameter of 25 nm and an inner diameter of 15 nM. Alpha-beta heterodimers associate head-to-tail to form protofilaments running lengthwise along the microtubule wall with the beta-tubulin subunit facing the microtubule plus end conferring a structural polarity. Microtubules usually have 13 protofilaments but different protofilament numbers can be found in some organisms and specialized cells. The cofactor is Mg(2+).

The protein localises to the cytoplasm. Its subcellular location is the cytoskeleton. Functionally, tubulin is the major constituent of microtubules, a cylinder consisting of laterally associated linear protofilaments composed of alpha- and beta-tubulin heterodimers. Microtubules grow by the addition of GTP-tubulin dimers to the microtubule end, where a stabilizing cap forms. Below the cap, tubulin dimers are in GDP-bound state, owing to GTPase activity of alpha-tubulin. The chain is Tubulin beta chain (TUB1) from Melampsora lini (Rust fungus).